A 332-amino-acid polypeptide reads, in one-letter code: UPF0194 membrane protein YbhG (332 aa).

The first 16 residues, 1–16 (MMKKPVVIGLAVVVLA), serve as a signal peptide directing secretion. Positions 108-209 (EEIAQAAAAV…LNLQDSTLIA (102 aa)) form a coiled coil.

This sequence belongs to the UPF0194 family.

It localises to the periplasm. This Escherichia coli O45:K1 (strain S88 / ExPEC) protein is UPF0194 membrane protein YbhG.